The following is a 194-amino-acid chain: Flagellar transcriptional regulator FlhC (194 aa).

The Zn(2+) site is built by Cys-139, Cys-142, Cys-159, and Cys-162.

This sequence belongs to the FlhC family. In terms of assembly, heterohexamer composed of two FlhC and four FlhD subunits. Each FlhC binds a FlhD dimer, forming a heterotrimer, and a hexamer assembles by dimerization of two heterotrimers. Requires Zn(2+) as cofactor.

The protein resides in the cytoplasm. Its function is as follows. Functions in complex with FlhD as a master transcriptional regulator that regulates transcription of several flagellar and non-flagellar operons by binding to their promoter region. Activates expression of class 2 flagellar genes, including fliA, which is a flagellum-specific sigma factor that turns on the class 3 genes. Also regulates genes whose products function in a variety of physiological pathways. This chain is Flagellar transcriptional regulator FlhC, found in Serratia marcescens.